Consider the following 164-residue polypeptide: Transcriptional regulator MraZ (164 aa).

SpoVT-AbrB domains lie at Arg7–Val63 and Leu92–Arg135.

Belongs to the MraZ family. Forms oligomers.

The protein localises to the cytoplasm. It localises to the nucleoid. In Chlorobaculum parvum (strain DSM 263 / NCIMB 8327) (Chlorobium vibrioforme subsp. thiosulfatophilum), this protein is Transcriptional regulator MraZ.